Reading from the N-terminus, the 423-residue chain is F-box protein At1g52495 (423 aa).

An F-box domain is found at 49 to 95; that stretch reads KLKDVHLPLDLIVEILKKLPTKSLMRFRCVSKPWSFIISKRRDFVES.

This is F-box protein At1g52495 from Arabidopsis thaliana (Mouse-ear cress).